Reading from the N-terminus, the 68-residue chain is Alpha/kappa-conotoxin-like pl14.2 (68 aa).

The first 27 residues, 1–27 (MPSVRSVTCCCLLWMMFSVQLVTPGSP), serve as a signal peptide directing secretion. A propeptide spanning residues 28-39 (ATAQLSGQRTAR) is cleaved from the precursor. 2 disulfide bridges follow: C46-C61 and C50-C63. R64 is subject to Arginine amide. Positions 65–68 (GKRD) are excised as a propeptide.

The protein belongs to the conotoxin J superfamily. As to expression, expressed by the venom duct.

It localises to the secreted. Functionally, highly inhibits both nicotinic acetylcholine receptors (neuronal (alpha-3/beta-4) and muscular (alpha-1/beta-1/epsilon/delta) subtypes) and the voltage-gated potassium channel Kv1.6/KCNA6 subtype. In Conus planorbis (Planorbis cone), this protein is Alpha/kappa-conotoxin-like pl14.2.